The primary structure comprises 947 residues: Netrin receptor unc-5 (947 aa).

The 99-residue stretch at 43-141 (VIRNKPLRLQ…VHLAYMRKHF (99 aa)) folds into the Ig-like domain. 5 cysteine pairs are disulfide-bonded: C53–C112, C160–C209, C243–C295, C247–C299, and C273–C285. Positions 139-226 (KHFLKSPVAQ…SRKTDPVEVQ (88 aa)) constitute an Ig-like C2-type domain. N-linked (GlcNAc...) asparagine glycosylation occurs at N206. TSP type-1 domains lie at 230 to 300 (DGGW…VPCK) and 302 to 354 (DGGW…QLCT). C-linked (Man) tryptophan glycans are attached at residues W305 and W308. Residues 369 to 389 (GSVASIFIVASFILAILAMFC) form a helical membrane-spanning segment. At 390-947 (CKRGNSKKSK…LSAFPQIVSP (558 aa)) the chain is on the cytoplasmic side. At Y510 the chain carries Phosphotyrosine. Residues 530–658 (NIVAAQIDSN…LNTNMFVQFE (129 aa)) enclose the ZU5 domain. A Death domain is found at 857–938 (ELARLLDMPN…DAVMVLERFL (82 aa)).

The protein belongs to the unc-5 family. As to quaternary structure, interacts (via cytoplasmic domain) with src-1 (via SH2 domain and SH3 domain). Interacts with madd-4. Interacts with unc-129; the interaction is direct. Post-translationally, phosphorylated on different cytoplasmic tyrosine residues. May be phosphorylated on tyrosine residues by src-1. Tyrosine phosphorylation is unc-6-dependent. In terms of processing, glycosylated via C-mannosylation by dpy-19 at Trp-305 and Trp-308. Expressed in cell bodies and axons of the VNC motor neurons that extend axons to the dorsal midline and within the ventral nerve cord. Expressed in gonadal distal tip cells (DTC).

The protein resides in the cell membrane. It localises to the membrane raft. It is found in the cell projection. Its subcellular location is the neuron projection. Receptor for netrin (unc-6) required for axon guidance. Mediates axon repulsion of neuronal growth cones in the developing nervous system upon ligand binding. Axon migration is mediated by the secreted unc-6, which promotes attraction of neurons and axons through binding to the unc-40 receptor, while repulsion requires both unc-5 and unc-40 receptors. Involved in the ventral-dorsal and anterior-posterior migration of distal tip cells along the body, which may be mediated by Wnt receptor mom-5, ced-10/Rac, ced-12/ELMO and mig-2/RhoG. This chain is Netrin receptor unc-5, found in Caenorhabditis elegans.